Here is a 496-residue protein sequence, read N- to C-terminus: Hexokinase-1 (496 aa).

Residues 4-24 (VAVGATVVCTAAVCAVAVLVV) form a helical membrane-spanning segment. The Hexokinase domain occupies 35 to 487 (GRVLAILKAF…SGIGAALLAA (453 aa)). The hexokinase small subdomain stretch occupies residues 90-228 (SGDEKGLFYA…GLDMRIAALV (139 aa)). ADP is bound by residues G104, T105, and N106. The D-glucose site is built by T194, K195, N229, and D230. The segment at 229-476 (NDTVGTLAGG…GSVEVTHSND (248 aa)) is hexokinase large subdomain. T253 is an ADP binding site. Residues N256, E284, and E315 each coordinate D-glucose. G441 contacts ADP.

This sequence belongs to the hexokinase family. As to quaternary structure, interacts with RPT5B in nucleus. Interacts with RHIP1. Interacts with KING1 in mitochondria. Interacts with CLF (via SANT domain) and EZA1/SWN (via SANT domain) in nucleus. In terms of tissue distribution, highly expressed in flowers and siliques, at intermediate levels in roots and stems, and at lower levels in rosette and cauline leaves.

It localises to the mitochondrion outer membrane. The protein resides in the nucleus. The enzyme catalyses a D-hexose + ATP = a D-hexose 6-phosphate + ADP + H(+). It catalyses the reaction D-fructose + ATP = D-fructose 6-phosphate + ADP + H(+). It carries out the reaction D-glucose + ATP = D-glucose 6-phosphate + ADP + H(+). The protein operates within carbohydrate metabolism; hexose metabolism. It participates in carbohydrate degradation; glycolysis; D-glyceraldehyde 3-phosphate and glycerone phosphate from D-glucose: step 1/4. Fructose and glucose phosphorylating enzyme. May be involved in the phosphorylation of glucose during the export from mitochondrion to cytosol. Acts as a sugar sensor which may regulate sugar-dependent gene repression or activation. Mediates the effects of sugar on plant growth and development independently of its catalytic activity or the sugar metabolism. May regulate the execution of program cell death in plant cells. Promotes roots and leaves growth. Together with sugar, is involved in the regulation of the expression of aquaporin genes, and reduces leaf water conductance, to coordinate sugar levels with the loss of water through transpiration. Regulates cell proliferation and expansion early during leaf development. Involved in sucrose-induced leaf growth stimulation independently of GPT2. May participate to the stimulation of hypocotyl elongation under long-day (LD) conditions. Forms a nuclear complex with CLF and EZA1/SWN to target common glucose-responsive genes and regulate glucose signaling. Is required for CLF- and EZA1/SWN-mediated histone H3 trimethylation on 'Lys-27' (H3K27me3) and glucose-mediated gene repression. In Arabidopsis thaliana (Mouse-ear cress), this protein is Hexokinase-1.